We begin with the raw amino-acid sequence, 127 residues long: Chondrosarcoma-associated gene 2/3 protein (127 aa).

Positions 68–127 (MSRKPRASSPLSNNHPPTPKRRGSGRHPLNPGPEALSKFPRQPGREKGPIKEVPGTKGSP) are disordered.

Weakly expressed in kidney. Expressed in various tumor cell lines including carcinomas, myeloid and lymphoid malignancies, melanomas and prostate cancer. Overexpressed in taxol-resistant breast cancer line MDA 435TR and the doxorubicin-resistant multiple myelanoma lines RPMI-8226/Dox40 and RPMI-8226/MDR10V.

In terms of biological role, drug-resistance related protein, its expression is associated with the chemotherapy resistant and neoplastic phenotype. May also be linked to the malignant phenotype. The protein is Chondrosarcoma-associated gene 2/3 protein (CSAG2) of Homo sapiens (Human).